A 255-amino-acid chain; its full sequence is uncharacterized protein (255 aa).

The N-terminal stretch at 1–23 (MKRLNKLVLGINLLFLVISITAG) is a signal peptide. Residue Cys-24 is the site of N-palmitoyl cysteine attachment. Cys-24 is lipidated: S-diacylglycerol cysteine.

The protein belongs to the staphylococcal tandem lipoprotein family.

The protein resides in the cell membrane. This is an uncharacterized protein from Staphylococcus aureus (strain MRSA252).